The primary structure comprises 107 residues: U1-lycotoxin-Ls1b (107 aa).

Residues 1 to 20 (MMKVLVVFALLVTLISYSSS) form the signal peptide. Positions 21–41 (EGIDDLEADELLSLMANEQTR) are excised as a propeptide. Intrachain disulfides connect Cys-44/Cys-59, Cys-51/Cys-68, Cys-58/Cys-86, and Cys-70/Cys-84.

It belongs to the neurotoxin 19 (CSTX) family. 04 (U1-Lctx) subfamily. In terms of tissue distribution, expressed by the venom gland.

It localises to the secreted. This is U1-lycotoxin-Ls1b from Lycosa singoriensis (Wolf spider).